Here is a 457-residue protein sequence, read N- to C-terminus: ATP-dependent protease ATPase subunit HslU (457 aa).

ATP-binding positions include isoleucine 18 and 60–65 (GVGKTE). The disordered stretch occupies residues 142–171 (KQPGMGFFNPAAPEEQEEQPSADQSSTREK). Residues aspartate 269, glutamate 335, and arginine 407 each coordinate ATP.

The protein belongs to the ClpX chaperone family. HslU subfamily. As to quaternary structure, a double ring-shaped homohexamer of HslV is capped on each side by a ring-shaped HslU homohexamer. The assembly of the HslU/HslV complex is dependent on binding of ATP.

It is found in the cytoplasm. In terms of biological role, ATPase subunit of a proteasome-like degradation complex; this subunit has chaperone activity. The binding of ATP and its subsequent hydrolysis by HslU are essential for unfolding of protein substrates subsequently hydrolyzed by HslV. HslU recognizes the N-terminal part of its protein substrates and unfolds these before they are guided to HslV for hydrolysis. This Maridesulfovibrio salexigens (strain ATCC 14822 / DSM 2638 / NCIMB 8403 / VKM B-1763) (Desulfovibrio salexigens) protein is ATP-dependent protease ATPase subunit HslU.